Reading from the N-terminus, the 480-residue chain is RuvB-like helicase 2 (480 aa).

73–80 contacts ATP; it reads GEPSTGKT.

It belongs to the RuvB family. As to quaternary structure, forms homohexameric rings. May form a dodecamer with rept made of two stacked hexameric rings. Component of the chromatin remodeling Ino80 complex.

It localises to the nucleus. It carries out the reaction ATP + H2O = ADP + phosphate + H(+). In terms of biological role, acts as a transcriptional coactivator in Wg signaling caused by altered arm signaling. Pont and rept interfere antagonistically with nuclear arm signaling function, and are required to enhance or reduce arm activity, respectively. Also an essential cofactor for the normal function of Myc; required for cellular proliferation and growth. Proposed core component of the chromatin remodeling Ino80 complex which is involved in transcriptional regulation, DNA replication and probably DNA repair. The sequence is that of RuvB-like helicase 2 from Drosophila pseudoobscura pseudoobscura (Fruit fly).